Consider the following 455-residue polypeptide: Ribulose bisphosphate carboxylase large chain (455 aa).

Lys-5 is subject to N6,N6,N6-trimethyllysine. Residues Asn-114 and Thr-164 each contribute to the substrate site. Catalysis depends on Lys-166, which acts as the Proton acceptor. Lys-168 provides a ligand contact to substrate. 3 residues coordinate Mg(2+): Lys-192, Asp-194, and Glu-195. Lys-192 is subject to N6-carboxylysine. His-285 functions as the Proton acceptor in the catalytic mechanism. Arg-286, His-318, and Ser-370 together coordinate substrate.

The protein belongs to the RuBisCO large chain family. Type I subfamily. In terms of assembly, heterohexadecamer of 8 large chains and 8 small chains; disulfide-linked. The disulfide link is formed within the large subunit homodimers. Mg(2+) serves as cofactor. Post-translationally, the disulfide bond which can form in the large chain dimeric partners within the hexadecamer appears to be associated with oxidative stress and protein turnover.

The protein localises to the plastid. The protein resides in the chloroplast. It carries out the reaction 2 (2R)-3-phosphoglycerate + 2 H(+) = D-ribulose 1,5-bisphosphate + CO2 + H2O. It catalyses the reaction D-ribulose 1,5-bisphosphate + O2 = 2-phosphoglycolate + (2R)-3-phosphoglycerate + 2 H(+). Its function is as follows. RuBisCO catalyzes two reactions: the carboxylation of D-ribulose 1,5-bisphosphate, the primary event in carbon dioxide fixation, as well as the oxidative fragmentation of the pentose substrate in the photorespiration process. Both reactions occur simultaneously and in competition at the same active site. The protein is Ribulose bisphosphate carboxylase large chain of Brownea coccinea (Rose of Venezuela).